Reading from the N-terminus, the 843-residue chain is Complement component C7 (843 aa).

Residues 1–22 (MKVISLFILVGFIGEFQSFSSA) form the signal peptide. Positions 27–80 (NCQWDFYAPWSECNGCTKTQTRRRSVAVYGQYGGQPCVGNAFETQSCEPTRGCP) constitute a TSP type-1 1 domain. Cystine bridges form between Cys-28–Cys-63, Cys-39–Cys-73, Cys-42–Cys-79, Cys-85–Cys-96, Cys-91–Cys-109, Cys-103–Cys-119, and Cys-128–Cys-165. C-linked (Man) tryptophan glycosylation occurs at Trp-36. The region spanning 83–121 (EGCGERFRCFSGQCISKSLVCNGDSDCDEDSADEDRCED) is the LDL-receptor class A domain. A compositionally biased stretch (acidic residues) spans 108 to 120 (DCDEDSADEDRCE). The disordered stretch occupies residues 108–143 (DCDEDSADEDRCEDSERRPSCDIDKPPPNIELTGNG). Residues 121-132 (DSERRPSCDIDK) are compositionally biased toward basic and acidic residues. Residues 124–456 (RRPSCDIDKP…EYLDEFDPCH (333 aa)) enclose the MACPF domain. A glycan (N-linked (GlcNAc...) asparagine) is linked at Asn-202. The disordered stretch occupies residues 219-240 (SRKRSFFRSSSSSSRSYTSHTN). Over residues 225–234 (FRSSSSSSRS) the composition is skewed to low complexity. Cystine bridges form between Cys-337/Cys-353, Cys-433/Cys-560, Cys-455/Cys-505, Cys-457/Cys-473, Cys-460/Cys-475, Cys-477/Cys-486, Cys-512/Cys-545, Cys-523/Cys-535, Cys-571/Cys-613, Cys-599/Cys-626, Cys-631/Cys-673, and Cys-659/Cys-688. Residues 457–487 (CRPCQNGGLATVEGTHCLCHCKPYTFGAACE) form the EGF-like domain. The region spanning 500 to 549 (DGGWSCWSSWSPCVQGKKTRSRECNNPPPSGGGRSCVGETTESTQCEDEE) is the TSP type-1 2 domain. C-linked (Man) tryptophan; partial glycosylation is found at Trp-503, Trp-506, and Trp-509. The segment at 516–538 (KKTRSRECNNPPPSGGGRSCVGE) is disordered. CCP stretches follow at residues 545–615 (CEDE…RCGE) and 616–693 (DLRW…QKEN). Sushi domains are found at residues 569–628 (EFCP…HCQK) and 629–690 (IACV…RCVQ). Factor I module (FIM) stretches follow at residues 695 to 770 (LTQA…ASAE) and 771 to 843 (KACG…AETQ). Residue Thr-696 is glycosylated (O-linked (GalNAc...) threonine). 9 disulfides stabilise this stretch: Cys-702-Cys-713, Cys-715-Cys-750, Cys-721-Cys-743, Cys-728-Cys-763, Cys-773-Cys-782, Cys-776-Cys-789, Cys-791-Cys-825, Cys-797-Cys-818, and Cys-805-Cys-838. A glycan (N-linked (GlcNAc...) (complex) asparagine) is linked at Asn-754.

Belongs to the complement C6/C7/C8/C9 family. As to quaternary structure, monomer or dimer; as a C5b-7 complex it can also form multimeric rosettes. Component of the membrane attack complex (MAC), composed of complement C5b, C6, C7, C8A, C8B, C8G and multiple copies of the pore-forming subunit C9. In terms of processing, C-, N- and O-glycosylated. O-glycosylated with core 1 or possibly core 8 glycans.

It localises to the secreted. Its subcellular location is the target cell membrane. Membrane attack complex (MAC) assembly is inhibited by CD59, thereby protecting self-cells from damage during complement activation. MAC assembly is also inhibited by clusterin (CLU) chaperones that inhibit polymerization of C9. Its function is as follows. Component of the membrane attack complex (MAC), a multiprotein complex activated by the complement cascade, which inserts into a target cell membrane and forms a pore, leading to target cell membrane rupture and cell lysis. The MAC is initiated by proteolytic cleavage of C5 into complement C5b in response to the classical, alternative, lectin and GZMK complement pathways. The complement pathways consist in a cascade of proteins that leads to phagocytosis and breakdown of pathogens and signaling that strengthens the adaptive immune system. C7 serves as a membrane anchor. During MAC assembly, associates with C5b and C6 to form the C5b-7 complex, a key lipophilic precursor of the MAC complex, which associates with the outer leaflet and reduces the energy for membrane bending. This chain is Complement component C7, found in Homo sapiens (Human).